A 335-amino-acid polypeptide reads, in one-letter code: Cytoskeleton protein RodZ (335 aa).

The Cytoplasmic portion of the chain corresponds to 1-111 (MNTEATHDQN…LGKRRKKRDG (111 aa)). The 53-residue stretch at 19–71 (LRNAREQLGLSQQAVAERLCLKVSTVRDIEEDKAPADLASTFLRGYIRSYARL) folds into the HTH cro/C1-type domain. The H-T-H motif DNA-binding region spans 30–49 (QQAVAERLCLKVSTVRDIEE). A helical; Signal-anchor for type II membrane protein membrane pass occupies residues 112 to 132 (WLMTFTWLVLFVVIGLSGAWW). Residues 133–335 (WQDHKAQQEE…TLNAEQSPAQ (203 aa)) are Periplasmic-facing. Positions 148-164 (DQSSAELNNNQSQSVPL) are enriched in polar residues. The tract at residues 148–244 (DQSSAELNNN…PLPTDQAGVT (97 aa)) is disordered. Low complexity-rich tracts occupy residues 165-205 (DTST…DPQQ) and 217-239 (DTAA…LPTD).

This sequence belongs to the RodZ family.

Its subcellular location is the cell inner membrane. Functionally, cytoskeletal protein that is involved in cell-shape control through regulation of the length of the long axis. The polypeptide is Cytoskeleton protein RodZ (Escherichia coli O127:H6 (strain E2348/69 / EPEC)).